We begin with the raw amino-acid sequence, 370 residues long: D-alanine--D-alanine ligase (370 aa).

Residues 144–352 form the ATP-grasp domain; that stretch reads KKIFADAGIP…YGALIERLVD (209 aa). 177 to 232 is an ATP binding site; the sequence is EEVLTYPVFVKPANLGSSVGISKATNKKELADAMTEAFLYDRRVVVEQGVVAREIE. Positions 306, 319, and 321 each coordinate Mg(2+).

It belongs to the D-alanine--D-alanine ligase family. The cofactor is Mg(2+). Mn(2+) is required as a cofactor.

The protein localises to the cytoplasm. It catalyses the reaction 2 D-alanine + ATP = D-alanyl-D-alanine + ADP + phosphate + H(+). Its pathway is cell wall biogenesis; peptidoglycan biosynthesis. In terms of biological role, cell wall formation. The chain is D-alanine--D-alanine ligase from Listeria monocytogenes serotype 4b (strain F2365).